We begin with the raw amino-acid sequence, 85 residues long: Small ribosomal subunit protein uS17 (85 aa).

This sequence belongs to the universal ribosomal protein uS17 family. Part of the 30S ribosomal subunit.

One of the primary rRNA binding proteins, it binds specifically to the 5'-end of 16S ribosomal RNA. The protein is Small ribosomal subunit protein uS17 of Acinetobacter baumannii (strain AB307-0294).